A 31-amino-acid chain; its full sequence is Antifungal protein 1 (31 aa).

Composition is skewed to basic and acidic residues over residues 1 to 10 (PGAGSQEERM) and 18 to 31 (DFSH…MVRE). The disordered stretch occupies residues 1 to 31 (PGAGSQEERMQGQMEGQDFSHEERFLSMVRE).

Heterodimer; disulfide-linked. Disulfide bonds.

Has antifungal activity against C.gloeosporioides but not against B.cinerea and Fusarium sp. or against various yeasts. Has no antibacterial activity. The chain is Antifungal protein 1 from Passiflora alata (Winged-stem passion flower).